The following is a 391-amino-acid chain: Processive diacylglycerol beta-glucosyltransferase (391 aa).

It belongs to the glycosyltransferase 28 family. UgtP subfamily.

It is found in the cell membrane. It carries out the reaction a 1,2-diacyl-3-O-(beta-D-glucopyranosyl)-sn-glycerol + UDP-alpha-D-glucose = a 1,2-diacyl-3-O-(beta-D-Glc-(1-&gt;6)-beta-D-Glc)-sn-glycerol + UDP + H(+). The enzyme catalyses a 1,2-diacyl-sn-glycerol + UDP-alpha-D-glucose = a 1,2-diacyl-3-O-(beta-D-glucopyranosyl)-sn-glycerol + UDP + H(+). The protein operates within glycolipid metabolism; diglucosyl-diacylglycerol biosynthesis. Functionally, processive glucosyltransferase involved in the biosynthesis of both the bilayer- and non-bilayer-forming membrane glucolipids. Is able to successively transfer two glucosyl residues to diacylglycerol (DAG), thereby catalyzing the formation of beta-monoglucosyl-DAG (3-O-(beta-D-glucopyranosyl)-1,2-diacyl-sn-glycerol) and beta-diglucosyl-DAG (3-O-(beta-D-glucopyranosyl-beta-(1-&gt;6)-D-glucopyranosyl)-1,2-diacyl-sn-glycerol). Beta-diglucosyl-DAG is the predominant glycolipid found in Bacillales and is also used as a membrane anchor for lipoteichoic acid (LTA). In Staphylococcus epidermidis (strain ATCC 12228 / FDA PCI 1200), this protein is Processive diacylglycerol beta-glucosyltransferase.